Reading from the N-terminus, the 329-residue chain is Beta-ketoacyl-[acyl-carrier-protein] synthase III (329 aa).

Residues cysteine 113 and histidine 255 contribute to the active site. An ACP-binding region spans residues 256-260 (QANQR). Residue asparagine 285 is part of the active site.

It belongs to the thiolase-like superfamily. FabH family. In terms of assembly, homodimer.

It is found in the cytoplasm. The catalysed reaction is malonyl-[ACP] + acetyl-CoA + H(+) = 3-oxobutanoyl-[ACP] + CO2 + CoA. It functions in the pathway lipid metabolism; fatty acid biosynthesis. Catalyzes the condensation reaction of fatty acid synthesis by the addition to an acyl acceptor of two carbons from malonyl-ACP. Catalyzes the first condensation reaction which initiates fatty acid synthesis and may therefore play a role in governing the total rate of fatty acid production. Possesses both acetoacetyl-ACP synthase and acetyl transacylase activities. Its substrate specificity determines the biosynthesis of branched-chain and/or straight-chain of fatty acids. This chain is Beta-ketoacyl-[acyl-carrier-protein] synthase III, found in Chlorobium phaeobacteroides (strain DSM 266 / SMG 266 / 2430).